The sequence spans 463 residues: Chromosomal replication initiator protein DnaA (463 aa).

Residues 1 to 90 are domain I, interacts with DnaA modulators; sequence MSLSLWQQCL…KPLSQIISQT (90 aa). The tract at residues 91–126 is domain II; sequence VTASVSAPSAPIVRVAAPSRPSWDNAAPQPELSYRS. Positions 127–343 are domain III, AAA+ region; the sequence is NVNPKHTFDN…GALNRVIANA (217 aa). Positions 171, 173, 174, and 175 each coordinate ATP. The domain IV, binds dsDNA stretch occupies residues 344 to 463; the sequence is NFTGRAITID…FSNLIRTLSS (120 aa).

This sequence belongs to the DnaA family. In terms of assembly, oligomerizes as a right-handed, spiral filament on DNA at oriC.

The protein localises to the cytoplasm. In terms of biological role, plays an essential role in the initiation and regulation of chromosomal replication. ATP-DnaA binds to the origin of replication (oriC) to initiate formation of the DNA replication initiation complex once per cell cycle. Binds the DnaA box (a 9 base pair repeat at the origin) and separates the double-stranded (ds)DNA. Forms a right-handed helical filament on oriC DNA; dsDNA binds to the exterior of the filament while single-stranded (ss)DNA is stabiized in the filament's interior. The ATP-DnaA-oriC complex binds and stabilizes one strand of the AT-rich DNA unwinding element (DUE), permitting loading of DNA polymerase. After initiation quickly degrades to an ADP-DnaA complex that is not apt for DNA replication. Binds acidic phospholipids. The protein is Chromosomal replication initiator protein DnaA of Serratia proteamaculans (strain 568).